Consider the following 477-residue polypeptide: GH30 family xylanase (477 aa).

The N-terminal stretch at M1 to A19 is a signal peptide. 3 N-linked (GlcNAc...) asparagine glycosylation sites follow: N194, N237, and N331.

Belongs to the glycosyl hydrolase 30 family.

It is found in the secreted. Activity is enhanced by 10 mM Co(2+), Cu 2(2+) and Mn(2+) to levels as high as 44%. Partial inhibition of activity from 5 to 15% is observed in the presence of the following compouinds at a centration of 10 mM (from higher inhibition to lower): EDTA &gt; Mg(2+) &gt; urea, Zn(2+) &gt; Fe(3+). Functionally, xylanase exhibiting endo- and exo-xylanase activity. Shows the highest activity toward beechwood glucuronoxylan, which consists of a beta-1,4-linked xylose backbone decorated with the methylated form of D-glucuronic acid (MeGlcA) attached directly to the main chain at xylose C2. Also acts against wheat arabinoxylan, a xylan without MeGlcA substituents along the main chain, but the xylanase activity is about two orders of magnitude lower than that achieved in the case of beechwood xylan. Shows no activity against carob galactomannan, konjac glucomannan, or barley beta-glucan. The recombinant xylanase also exhibits an exo-activity by releasing processively disaccharide units from the non-reducing end of linear and decorated xylooligosaccharides (XOS). In Thermothelomyces thermophilus (strain ATCC 42464 / BCRC 31852 / DSM 1799) (Sporotrichum thermophile), this protein is GH30 family xylanase.